The sequence spans 614 residues: Phragmoplastin DRP1C (614 aa).

The Dynamin-type G domain maps to 32-301 (WEALPTVAVV…LETVIRQKIP (270 aa)). Residues 42-49 (GGQSSGKS) form a G1 motif region. Residue 45–50 (SSGKSS) participates in GTP binding. The segment at 68–70 (VTR) is G2 motif. A G3 motif region spans residues 143–146 (DLPG). A G4 motif region spans residues 212 to 215 (TKLD). GTP is bound by residues 213 to 218 (KLDIMD) and 243 to 246 (NRSQ). A G5 motif region spans residues 242 to 245 (VNRS). The disordered stretch occupies residues 499–519 (EPEKEKPNPRNAPAPNADPYS). A compositionally biased stretch (low complexity) spans 507–517 (PRNAPAPNADP). The GED domain occupies 523-614 (FRKIGSNVSA…RDDIDAVAWK (92 aa)).

This sequence belongs to the TRAFAC class dynamin-like GTPase superfamily. Dynamin/Fzo/YdjA family. Forms homodimer and may homooligomerize and heterooligomerize to form the phragmoplastin complex. Binds to PHIP1. As to expression, ubiquitous.

It is found in the cytoplasm. It localises to the cytoskeleton. Its subcellular location is the cell cortex. The protein resides in the cytoplasmic vesicle. The protein localises to the clathrin-coated vesicle. It is found in the phragmoplast. The catalysed reaction is GTP + H2O = GDP + phosphate + H(+). In terms of biological role, microtubule-associated force-producing protein that is targeted to the growing edges of the cell plate during cytokinesis. Also plays a major role in plasma membrane maintenance during pollen maturation. Has a GTPase activity. The chain is Phragmoplastin DRP1C from Arabidopsis thaliana (Mouse-ear cress).